Here is a 103-residue protein sequence, read N- to C-terminus: Large ribosomal subunit protein bL21 (103 aa).

Belongs to the bacterial ribosomal protein bL21 family. As to quaternary structure, part of the 50S ribosomal subunit. Contacts protein L20.

Its function is as follows. This protein binds to 23S rRNA in the presence of protein L20. The polypeptide is Large ribosomal subunit protein bL21 (Chromobacterium violaceum (strain ATCC 12472 / DSM 30191 / JCM 1249 / CCUG 213 / NBRC 12614 / NCIMB 9131 / NCTC 9757 / MK)).